A 437-amino-acid chain; its full sequence is uncharacterized protein (437 aa).

A phosphoserine mark is found at serine 290 and serine 293. A Phosphothreonine modification is found at threonine 296. 2 positions are modified to phosphoserine: serine 418 and serine 428.

This is an uncharacterized protein from Schizosaccharomyces pombe (strain 972 / ATCC 24843) (Fission yeast).